Consider the following 345-residue polypeptide: GTP cyclohydrolase-2 (345 aa).

The tract at residues 1 to 27 is disordered; sequence MTIDNYDNSKQDSSKYEVSGTGDGRNG. GTP is bound at residue 143-147; the sequence is RIHSE. Residues C148, C159, and C161 each contribute to the Zn(2+) site. Residues Q164, 197-199, and T219 each bind GTP; that span reads EGR. The active-site Proton acceptor is the D231. R233 acts as the Nucleophile in catalysis. The GTP site is built by T254 and K259. The tract at residues 312–345 is disordered; sequence PLKLHTNPQPTETSEAQNQNRMNSALSSTSTLAI. Residues 317 to 345 show a composition bias toward polar residues; that stretch reads TNPQPTETSEAQNQNRMNSALSSTSTLAI.

This sequence belongs to the GTP cyclohydrolase II family. Zn(2+) is required as a cofactor.

The catalysed reaction is GTP + 4 H2O = 2,5-diamino-6-hydroxy-4-(5-phosphoribosylamino)-pyrimidine + formate + 2 phosphate + 3 H(+). The protein operates within cofactor biosynthesis; riboflavin biosynthesis; 5-amino-6-(D-ribitylamino)uracil from GTP: step 1/4. Catalyzes the conversion of GTP to 2,5-diamino-6-ribosylamino-4(3H)-pyrimidinone 5'-phosphate (DARP), formate and pyrophosphate. The sequence is that of GTP cyclohydrolase-2 (RIB1) from Saccharomyces cerevisiae (strain ATCC 204508 / S288c) (Baker's yeast).